The sequence spans 475 residues: Lipoprotein lipase (475 aa).

Residues 1 to 27 (MESKALLLVALGMWFQSLTATRGGVAA) form the signal peptide. Residues 32 to 53 (GDFIDIESKFALRTPEDTAEDT) are interaction with GPIHBP1. C54 and C67 are oxidised to a cystine. N70 carries an N-linked (GlcNAc...) asparagine glycan. Y121 is modified (3'-nitrotyrosine). Catalysis depends on S159, which acts as the Nucleophile. D183 serves as the catalytic Charge relay system. A 3'-nitrotyrosine modification is found at Y191. Positions 194, 197, 199, and 202 each coordinate Ca(2+). Residues C243 and C266 are joined by a disulfide bond. H268 functions as the Charge relay system in the catalytic mechanism. 2 cysteine pairs are disulfide-bonded: C291–C310 and C302–C305. The PLAT domain maps to 341 to 464 (FHYQVKIHFS…KGKASVVFVK (124 aa)). Y343 is subject to 3'-nitrotyrosine. N386 carries an N-linked (GlcNAc...) asparagine glycan. Residues 417–421 (WSDWW) form an important for interaction with lipoprotein particles region. Residues 430-434 (KIRVK) are important for heparin binding. Residues 443-467 (IFCSREKVSHLQKGKASVVFVKCHD) form an interaction with GPIHBP1 region. An intrachain disulfide couples C445 to C465.

Belongs to the AB hydrolase superfamily. Lipase family. Homodimer. Interacts with GPIHBP1 with 1:1 stoichiometry. Interacts with APOC2; the interaction activates LPL activity in the presence of lipids. Interaction with heparan sulfate proteoglycans is required to protect LPL against loss of activity. Associates with lipoprotein particles in blood plasma. Interacts with LMF1 and SEL1L; interaction with SEL1L is required to prevent aggregation of newly synthesized LPL in the endoplasmic reticulum (ER), and for normal export of LPL from the ER to the extracellular space. Interacts with SORL1; SORL1 acts as a sorting receptor, promoting LPL localization to endosomes and later to lysosomes, leading to degradation of newly synthesized LPL. In terms of processing, tyrosine nitration after lipopolysaccharide (LPS) challenge down-regulates the lipase activity.

It is found in the cell membrane. The protein resides in the secreted. The protein localises to the extracellular space. It localises to the extracellular matrix. The catalysed reaction is a triacylglycerol + H2O = a diacylglycerol + a fatty acid + H(+). The apolipoprotein APOC2 acts as a coactivator of LPL activity. Ca(2+) binding promotes protein stability and formation of the active homodimer. Interaction with GPIHBP1 protects LPL against inactivation by ANGPTL4. Its function is as follows. Key enzyme in triglyceride metabolism. Catalyzes the hydrolysis of triglycerides from circulating chylomicrons and very low density lipoproteins (VLDL), and thereby plays an important role in lipid clearance from the blood stream, lipid utilization and storage. Mediates margination of triglyceride-rich lipoprotein particles in capillaries. Recruited to its site of action on the luminal surface of vascular endothelium by binding to GPIHBP1 and cell surface heparan sulfate proteoglycans. The polypeptide is Lipoprotein lipase (LPL) (Neovison vison (American mink)).